A 450-amino-acid chain; its full sequence is Phosphoglucosamine mutase (450 aa).

The Phosphoserine intermediate role is filled by S97. Residues S97, D236, D238, and D240 each coordinate Mg(2+). Position 97 is a phosphoserine (S97).

Belongs to the phosphohexose mutase family. Requires Mg(2+) as cofactor. In terms of processing, activated by phosphorylation.

The enzyme catalyses alpha-D-glucosamine 1-phosphate = D-glucosamine 6-phosphate. Its function is as follows. Catalyzes the conversion of glucosamine-6-phosphate to glucosamine-1-phosphate. This Prochlorococcus marinus (strain MIT 9215) protein is Phosphoglucosamine mutase.